Here is a 56-residue protein sequence, read N- to C-terminus: Small ribosomal subunit protein bS21 (56 aa).

This sequence belongs to the bacterial ribosomal protein bS21 family.

In Dictyoglomus thermophilum (strain ATCC 35947 / DSM 3960 / H-6-12), this protein is Small ribosomal subunit protein bS21.